A 217-amino-acid chain; its full sequence is Ras-related protein RABA1e (217 aa).

GTP is bound at residue 20-27; sequence GDSGVGKS. The Effector region signature appears at 42–50; sequence SKSTIGVEF. GTP is bound by residues 68 to 72, 126 to 129, and 156 to 157; these read DTAGQ, NKAD, and SA. S-geranylgeranyl cysteine attachment occurs at residues C214 and C215.

This sequence belongs to the small GTPase superfamily. Rab family.

The protein localises to the cell membrane. Functionally, intracellular vesicle trafficking and protein transport. This is Ras-related protein RABA1e (RABA1E) from Arabidopsis thaliana (Mouse-ear cress).